The following is a 606-amino-acid chain: CDPK-related kinase 8 (606 aa).

Over residues Met1–Arg14 the composition is skewed to polar residues. A disordered region spans residues Met1 to Glu132. Gly2 is lipidated: N-myristoyl glycine. The segment covering Lys98–Lys110 has biased composition (basic residues). Positions Val150–Ile412 constitute a Protein kinase domain. ATP is bound by residues Ile156 to Thr164 and Lys182. Asp278 serves as the catalytic Proton acceptor. The residue at position 318 (Ser318) is a Phosphoserine. The segment at Asp418–Leu448 is autoinhibitory domain. Residues Ser437–Ile457 form a calmodulin binding (CaMBD) region. EF-hand domains follow at residues Asp455–Ala491, Met492–His527, Glu528–Ile567, and His570–Arg599. Residues Asn470, Asp472, Glu516, Asp545, Asn547, Asn549, Glu556, Asp581, and Lys583 each contribute to the Ca(2+) site. Residue Ser585 is modified to Phosphoserine.

The protein belongs to the protein kinase superfamily. Ser/Thr protein kinase family. CDPK subfamily. As to quaternary structure, binds calmodulin (CaM) in a calcium-dependent manner. Autophosphorylated.

It is found in the membrane. The catalysed reaction is L-seryl-[protein] + ATP = O-phospho-L-seryl-[protein] + ADP + H(+). It catalyses the reaction L-threonyl-[protein] + ATP = O-phospho-L-threonyl-[protein] + ADP + H(+). Its activity is regulated as follows. Activated by calcium and calmodulin. Autophosphorylation may play an important role in the regulation of the kinase activity. May play a role in signal transduction pathways that involve calcium as a second messenger. This is CDPK-related kinase 8 (CRK8) from Arabidopsis thaliana (Mouse-ear cress).